A 239-amino-acid chain; its full sequence is Large ribosomal subunit protein uL2 (239 aa).

Disordered stretches follow at residues 1 to 28 (MGKR…VGPA) and 199 to 239 (SHPH…RRKG). Over residues 225–239 (KVGHIAARRTGRRKG) the composition is skewed to basic residues.

Belongs to the universal ribosomal protein uL2 family. As to quaternary structure, part of the 50S ribosomal subunit. Forms a bridge to the 30S subunit in the 70S ribosome.

In terms of biological role, one of the primary rRNA binding proteins. Required for association of the 30S and 50S subunits to form the 70S ribosome, for tRNA binding and peptide bond formation. It has been suggested to have peptidyltransferase activity; this is somewhat controversial. Makes several contacts with the 16S rRNA in the 70S ribosome. The polypeptide is Large ribosomal subunit protein uL2 (Staphylothermus marinus (strain ATCC 43588 / DSM 3639 / JCM 9404 / F1)).